Consider the following 127-residue polypeptide: Small ribosomal subunit protein uS12 (127 aa).

Asp-89 is subject to 3-methylthioaspartic acid. The interval 101–127 (ALDTSGVAGRTQRRSKYGAKRPKEAKK) is disordered. The span at 111–127 (TQRRSKYGAKRPKEAKK) shows a compositional bias: basic residues.

This sequence belongs to the universal ribosomal protein uS12 family. Part of the 30S ribosomal subunit. Contacts proteins S8 and S17. May interact with IF1 in the 30S initiation complex.

Functionally, with S4 and S5 plays an important role in translational accuracy. Interacts with and stabilizes bases of the 16S rRNA that are involved in tRNA selection in the A site and with the mRNA backbone. Located at the interface of the 30S and 50S subunits, it traverses the body of the 30S subunit contacting proteins on the other side and probably holding the rRNA structure together. The combined cluster of proteins S8, S12 and S17 appears to hold together the shoulder and platform of the 30S subunit. The sequence is that of Small ribosomal subunit protein uS12 from Flavobacterium psychrophilum (strain ATCC 49511 / DSM 21280 / CIP 103535 / JIP02/86).